A 699-amino-acid polypeptide reads, in one-letter code: DNA ligase (699 aa).

Residues 47 to 51 (DAQYD), 96 to 97 (SL), and glutamate 128 contribute to the NAD(+) site. Lysine 130 (N6-AMP-lysine intermediate) is an active-site residue. Residues arginine 151, glutamate 186, lysine 303, and lysine 327 each coordinate NAD(+). Zn(2+) contacts are provided by cysteine 422, cysteine 425, cysteine 440, and cysteine 446. In terms of domain architecture, BRCT spans 620–699 (GDNLLLSNQT…EEWIKMVNEL (80 aa)).

It belongs to the NAD-dependent DNA ligase family. LigA subfamily. Mg(2+) is required as a cofactor. It depends on Mn(2+) as a cofactor.

The enzyme catalyses NAD(+) + (deoxyribonucleotide)n-3'-hydroxyl + 5'-phospho-(deoxyribonucleotide)m = (deoxyribonucleotide)n+m + AMP + beta-nicotinamide D-nucleotide.. DNA ligase that catalyzes the formation of phosphodiester linkages between 5'-phosphoryl and 3'-hydroxyl groups in double-stranded DNA using NAD as a coenzyme and as the energy source for the reaction. It is essential for DNA replication and repair of damaged DNA. The sequence is that of DNA ligase from Orientia tsutsugamushi (strain Ikeda) (Rickettsia tsutsugamushi).